Reading from the N-terminus, the 73-residue chain is Mauriporin (73 aa).

The signal sequence occupies residues methionine 1–serine 22.

This sequence belongs to the non-disulfide-bridged peptide (NDBP) superfamily. Long chain multifunctional peptide (group 2) family. Expressed by the venom gland.

Its subcellular location is the secreted. The protein resides in the target cell membrane. In terms of biological role, amphipathic peptide that displays potent antimicrobial activities against a range of Gram-positive and Gram-negative planktonic bacteria with MIC values in the range 5 uM to 10 uM. In more details, it is active on Listeria ivanovii (MIC=5 uM), Staphylococcus epidermidis (MIC=10 uM), Salmonella enterica (MIC=5 uM), Pseudomonas aeruginosa (ATCC 27853) (MIC=5 uM), Acinetobacter baumannii (MIC=5 uM), Klebsiella pneumoniae (MIC=5 uM), Escherichia coli (MIC=7.5 uM), Salmonella typhimurium (MIC=7.5 uM), Pseudomonas aeruginosa (ATCC 9027) (MIC=10 uM). Is also able to prevent P.aeruginosa biofilm formation while showing weak hemolytic activity towards human erythrocytes. Probably induces bacterial cell death through membrane permeabilization. Moreover, shows DNA-binding activities. Also exerts potent selective cytotoxic and antiproliferative activity against three different prostate cancer cell lines (IC(50)=4.4-7.8 uM), compared to non-tumorigenic cell lines (IC(50)=59.7 uM in Vero and 62.5 uM in HUVEC cells). This peptide possibly exerts its cytotoxic activity through a necrotic mode of cell death. Only shows diminished hemolytic activity against sheep erythrocytes. Does not induce cell death through apoptosis and consequently is not acting upon an intracellular target. This Androctonus mauritanicus (Fat-tailed scorpion) protein is Mauriporin.